The chain runs to 436 residues: 3-ketoacyl-CoA thiolase (436 aa).

Cys-99 (acyl-thioester intermediate) is an active-site residue. Catalysis depends on proton acceptor residues His-392 and Cys-422.

It belongs to the thiolase-like superfamily. Thiolase family. Heterotetramer of two alpha chains (FadJ) and two beta chains (FadI).

It localises to the cytoplasm. The catalysed reaction is an acyl-CoA + acetyl-CoA = a 3-oxoacyl-CoA + CoA. It participates in lipid metabolism; fatty acid beta-oxidation. Catalyzes the final step of fatty acid oxidation in which acetyl-CoA is released and the CoA ester of a fatty acid two carbons shorter is formed. The chain is 3-ketoacyl-CoA thiolase from Shigella flexneri.